The following is a 369-amino-acid chain: Phenylalanine--tRNA ligase alpha subunit (369 aa).

Residue Glu-269 participates in Mg(2+) binding.

This sequence belongs to the class-II aminoacyl-tRNA synthetase family. Phe-tRNA synthetase alpha subunit type 1 subfamily. Tetramer of two alpha and two beta subunits. It depends on Mg(2+) as a cofactor.

It is found in the cytoplasm. The catalysed reaction is tRNA(Phe) + L-phenylalanine + ATP = L-phenylalanyl-tRNA(Phe) + AMP + diphosphate + H(+). The sequence is that of Phenylalanine--tRNA ligase alpha subunit from Brucella abortus (strain 2308).